A 131-amino-acid polypeptide reads, in one-letter code: Antileukoproteinase (131 aa).

The N-terminal stretch at 1–25 (MKSCGLLPFTVLLALGILAPWTVEG) is a signal peptide. WAP domains lie at 29-77 (DAIK…VNPV) and 83-131 (VWRK…LPPM). Disulfide bonds link cysteine 36–cysteine 65, cysteine 44–cysteine 69, cysteine 52–cysteine 64, cysteine 58–cysteine 73, cysteine 90–cysteine 119, cysteine 97–cysteine 123, cysteine 106–cysteine 118, and cysteine 112–cysteine 127. Positions 85–131 (RKPGRCVKTQARCMMLNPPNVCQRDGQCDGKYKCCEGICGKVCLPPM) are elastase inhibitory domain.

As to quaternary structure, interacts with GRN; interaction protects progranulin from proteolysis. As to expression, detected in bronchial epithelial cells. Detected in bronchoalveolar fluid after infection with M.tuberculosis (at protein level). Highest expression in lung, spleen, intestine and epididymis with lower levels in liver and seminal vesicle. No expression in brain, heart, kidney and muscle.

It is found in the secreted. Functionally, acid-stable proteinase inhibitor with strong affinities for trypsin, chymotrypsin, elastase, and cathepsin G. Modulates the innate immune response after bacterial infection. Contributes to regulate the inflammatory and immune responses to the intracellular parasite L.major. Down-regulates responses to bacterial lipopolysaccharide (LPS). Plays a role in regulating the activation of NF-kappa-B and inflammatory responses. Has antimicrobial activity against mycobacteria, but not against salmonella. Contributes to normal resistance against infection by M.tuberculosis. Required for normal resistance to L.major. Required for normal wound healing, probably by preventing tissue damage by limiting protease activity. Together with ELANE, required for normal differentiation and proliferation of bone marrow myeloid cells. This is Antileukoproteinase (Slpi) from Mus musculus (Mouse).